Here is a 523-residue protein sequence, read N- to C-terminus: Glycerate kinase (523 aa).

The residue at position 60 (Ser-60) is a Phosphoserine. At Lys-200 the chain carries N6-acetyllysine.

Belongs to the glycerate kinase type-2 family.

It localises to the cytoplasm. The enzyme catalyses (R)-glycerate + ATP = (2R)-3-phosphoglycerate + ADP + H(+). The polypeptide is Glycerate kinase (GLYCTK) (Bos taurus (Bovine)).